The primary structure comprises 111 residues: DIVLTQSPASLAVSLGQRATISCRASKSVSTSGYSYMHWYQQKPGQPPKLLIYLASNLESGVPARFSGSGSGTDFTLNIHPVEEEDAATYYCQHSRELPRTFGGGTKLEIK.

The interval 1–23 (DIVLTQSPASLAVSLGQRATISC) is framework-1. C23 and C92 are oxidised to a cystine. Residues 24–38 (RASKSVSTSGYSYMH) are complementarity-determining-1. The segment at 39-53 (WYQQKPGQPPKLLIY) is framework-2. Residues 54 to 60 (LASNLES) are complementarity-determining-2. Residues 61–92 (GVPARFSGSGSGTDFTLNIHPVEEEDAATYYC) form a framework-3 region. The complementarity-determining-3 stretch occupies residues 93-101 (QHSRELPRT). Residues 102 to 111 (FGGGTKLEIK) are framework-4.

The protein is Ig kappa chain V-III region PC 6684 of Mus musculus (Mouse).